The chain runs to 1048 residues: Platelet-derived growth factor receptor beta (1048 aa).

A signal peptide spans 1-30; that stretch reads MLRASAMRAAVLHLTVALAALLSSCTTVSC. Topologically, residues 31-528 are extracellular; that stretch reads LKIVPEEKQL…LVSSSLFSQV (498 aa). Residues 35 to 124 form the Ig-like C2-type 1 domain; the sequence is PEEKQLILAE…EIKEVAVFVP (90 aa). Cystine bridges form between C52-C108 and C153-C194. N-linked (GlcNAc...) asparagine glycosylation is found at N87, N159, N224, and N239. Ig-like C2-type domains lie at 216–309 and 319–406; these read PEDI…ASVN and AVKS…KEVT. A disulfide bridge links C240 with C293. N309, N327, and N457 each carry an N-linked (GlcNAc...) asparagine glycan. C434 and C503 form a disulfide bridge. The helical transmembrane segment at 529 to 549 threads the bilayer; that stretch reads VLLAVVLTLVPIIIMSIIILI. Topologically, residues 550–1048 are cytoplasmic; sequence AVWKKKPRYE…PIPDPKPEKS (499 aa). Residues Y558, Y575, and Y577 each carry the phosphotyrosine; by autocatalysis modification. The region spanning 596–957 is the Protein kinase domain; sequence LVLGRTLGSG…FLVHCVGDML (362 aa). ATP-binding positions include 602 to 610 and K630; that span reads LGSGAFGRV. Phosphotyrosine; by autocatalysis is present on residues Y735, Y746, Y758, Y766, and Y770. The Proton acceptor role is filled by D821. Phosphotyrosine; by autocatalysis is present on residues Y852 and Y1036.

It belongs to the protein kinase superfamily. Tyr protein kinase family. CSF-1/PDGF receptor subfamily. In terms of assembly, interacts with homodimeric PDGFB and PDGFD, and with heterodimers formed by PDGFA and PDGFB. Monomer in the absence of bound ligand. Interaction with homodimeric PDGFB, heterodimers formed by PDGFA and PDGFB or homodimeric PDGFD, leads to receptor dimerization, where both PDGFRA homodimers and heterodimers with PDGFRB are observed. Post-translationally, ubiquitinated. After autophosphorylation, the receptor is polyubiquitinated, leading to its degradation. In terms of processing, autophosphorylated on tyrosine residues upon ligand binding. Autophosphorylation occurs in trans, i.e. one subunit of the dimeric receptor phosphorylates tyrosine residues on the other subunit.

Its subcellular location is the cell membrane. The protein localises to the cytoplasmic vesicle. It is found in the lysosome lumen. It carries out the reaction L-tyrosyl-[protein] + ATP = O-phospho-L-tyrosyl-[protein] + ADP + H(+). Present in an inactive conformation in the absence of bound ligand. Binding of PDGFB and/or PDGFD leads to dimerization and activation by autophosphorylation on tyrosine residues. Tyrosine-protein kinase that acts as a cell-surface receptor for homodimeric PDGFB and PDGFD and for heterodimers formed by PDGFA and PDGFB, and plays an essential role in the regulation of embryonic development, cell proliferation, survival, differentiation, chemotaxis and migration. Plays an essential role in blood vessel development by promoting proliferation, migration and recruitment of pericytes and smooth muscle cells to endothelial cells. Required for normal development of the cardiovascular system. Required for normal recruitment of pericytes (mesangial cells) in the kidney glomerulus, and for normal formation of a branched network of capillaries in kidney glomeruli. Promotes rearrangement of the actin cytoskeleton and the formation of membrane ruffles. Binding of its cognate ligands - homodimeric PDGFB, heterodimers formed by PDGFA and PDGFB or homodimeric PDGFD -leads to the activation of several signaling cascades; the response depends on the nature of the bound ligand and is modulated by the formation of heterodimers between PDGFRA and PDGFRB. Receptor signaling is down-regulated by protein phosphatases that dephosphorylate the receptor and its down-stream effectors, and by rapid internalization of the activated receptor. The protein is Platelet-derived growth factor receptor beta (pdgfrb) of Takifugu rubripes (Japanese pufferfish).